Reading from the N-terminus, the 1351-residue chain is uncharacterized protein (1351 aa).

Residues 1–17 (MSKKDSKNSPKKSKDTN) show a composition bias toward basic and acidic residues. Residues 1–31 (MSKKDSKNSPKKSKDTNSDESSSSNAETSSD) are disordered. The segment covering 19-31 (DESSSSNAETSSD) has biased composition (low complexity).

This is an uncharacterized protein from Acanthamoeba polyphaga mimivirus (APMV).